The sequence spans 434 residues: Glutamyl-tRNA reductase (434 aa).

Residues 49-52 (TCNR), Ser-109, 114-116 (EPQ), and Gln-120 each bind substrate. Cys-50 (nucleophile) is an active-site residue. Residue 189–194 (GAGEMC) participates in NADP(+) binding.

The protein belongs to the glutamyl-tRNA reductase family. As to quaternary structure, homodimer.

It carries out the reaction (S)-4-amino-5-oxopentanoate + tRNA(Glu) + NADP(+) = L-glutamyl-tRNA(Glu) + NADPH + H(+). The protein operates within porphyrin-containing compound metabolism; protoporphyrin-IX biosynthesis; 5-aminolevulinate from L-glutamyl-tRNA(Glu): step 1/2. In terms of biological role, catalyzes the NADPH-dependent reduction of glutamyl-tRNA(Glu) to glutamate 1-semialdehyde (GSA). This Geotalea uraniireducens (strain Rf4) (Geobacter uraniireducens) protein is Glutamyl-tRNA reductase.